A 169-amino-acid chain; its full sequence is 2-C-methyl-D-erythritol 2,4-cyclodiphosphate synthase (169 aa).

D13 and H15 together coordinate a divalent metal cation. 4-CDP-2-C-methyl-D-erythritol 2-phosphate-binding positions include 13–15 (DIH) and 40–41 (HS). H48 lines the a divalent metal cation pocket. Residues 62 to 64 (DIG), 138 to 141 (TTNE), and R148 each bind 4-CDP-2-C-methyl-D-erythritol 2-phosphate.

The protein belongs to the IspF family. In terms of assembly, homotrimer. The cofactor is a divalent metal cation.

The enzyme catalyses 4-CDP-2-C-methyl-D-erythritol 2-phosphate = 2-C-methyl-D-erythritol 2,4-cyclic diphosphate + CMP. The protein operates within isoprenoid biosynthesis; isopentenyl diphosphate biosynthesis via DXP pathway; isopentenyl diphosphate from 1-deoxy-D-xylulose 5-phosphate: step 4/6. Its function is as follows. Involved in the biosynthesis of isopentenyl diphosphate (IPP) and dimethylallyl diphosphate (DMAPP), two major building blocks of isoprenoid compounds. Catalyzes the conversion of 4-diphosphocytidyl-2-C-methyl-D-erythritol 2-phosphate (CDP-ME2P) to 2-C-methyl-D-erythritol 2,4-cyclodiphosphate (ME-CPP) with a corresponding release of cytidine 5-monophosphate (CMP). This Akkermansia muciniphila (strain ATCC BAA-835 / DSM 22959 / JCM 33894 / BCRC 81048 / CCUG 64013 / CIP 107961 / Muc) protein is 2-C-methyl-D-erythritol 2,4-cyclodiphosphate synthase.